Reading from the N-terminus, the 351-residue chain is Cobalt-precorrin-5B C(1)-methyltransferase (351 aa).

This sequence belongs to the CbiD family.

The enzyme catalyses Co-precorrin-5B + S-adenosyl-L-methionine = Co-precorrin-6A + S-adenosyl-L-homocysteine. Its pathway is cofactor biosynthesis; adenosylcobalamin biosynthesis; cob(II)yrinate a,c-diamide from sirohydrochlorin (anaerobic route): step 6/10. Its function is as follows. Catalyzes the methylation of C-1 in cobalt-precorrin-5B to form cobalt-precorrin-6A. The polypeptide is Cobalt-precorrin-5B C(1)-methyltransferase (Thermosipho africanus (strain TCF52B)).